Consider the following 174-residue polypeptide: RxLR effector protein 207 (174 aa).

An N-terminal signal peptide occupies residues M1–A20. A RxLR-dEER motif is present at residues R46–R62. The interval V82 to T99 is disordered.

This sequence belongs to the RxLR effector family. As to quaternary structure, interacts with Nicotiana benthamiana ACD11, BPA1 (binding partner of ACD11), as well as BPA-like proteins BPL1, BPL2, BPL3 and BPL4.

The protein localises to the secreted. The protein resides in the host cell membrane. Secreted effector that activates ROS-mediated cell death in plant host and is essential for virulence. Plays a role in the transition from the biotrophic to necrotrophic stage. Associates with and promotes the degradation of Nicotiana benthamiana BPA1, BPL1, BPL2, and BPL4 to disrupt ACD11 stabilization in a 26S proteasome-dependent manner. This Phytophthora capsici protein is RxLR effector protein 207.